Here is a 1042-residue protein sequence, read N- to C-terminus: Exosome RNA helicase MTR4 (1042 aa).

The residue at position 2 (Ala-2) is an N-acetylalanine. The disordered stretch occupies residues 16–74; it reads DSTTAAGTKKDKEKDKGKWKGPPGSADKAGKRFDGKLQSESTNNGKNKRDVDFEGTDEP. Residues 23-33 show a composition bias toward basic and acidic residues; sequence TKKDKEKDKGK. Residue Lys-24 forms a Glycyl lysine isopeptide (Lys-Gly) (interchain with G-Cter in SUMO2) linkage. Position 40 is a phosphoserine (Ser-40). A compositionally biased stretch (basic and acidic residues) spans 43–52; the sequence is KAGKRFDGKL. 2 positions are modified to N6-acetyllysine: Lys-51 and Lys-78. Residues Ile-139, 161 to 168, Ser-164, Gly-166, Lys-167, and Thr-168 contribute to the ATP site; that span reads AHTSAGKT. Residues 148–304 form the Helicase ATP-binding domain; it reads IQCVDNNQSV…WICHLHKQPC (157 aa). The DEIH box motif lies at 252–255; it reads DEIH. Lys-358 participates in a covalent cross-link: Glycyl lysine isopeptide (Lys-Gly) (interchain with G-Cter in SUMO2). The Helicase C-terminal domain occupies 405 to 577; it reads QMTKLDFNTD…NMVLNLLRVE (173 aa). Glycyl lysine isopeptide (Lys-Gly) (interchain with G-Cter in SUMO2) cross-links involve residues Lys-684 and Lys-723.

This sequence belongs to the helicase family. SKI2 subfamily. As to quaternary structure, component of a TRAMP-like complex, an ATP-dependent exosome regulatory complex consisting of a helicase (MTREX), an oligadenylate polymerase (TENT4B or TENT4A), and a substrate specific RNA-binding factor (ZCCHC7 or ZCCHC8). Several TRAMP-like complexes exist with specific compositions and are associated with nuclear, or nucleolar RNA exosomes. Identified in the spliceosome C complex. Component of the poly(A) tail exosome targeting (PAXT) complex made of PABPN1, ZFC3H1 and MTREX that directs a subset of long and polyadenylated poly(A) RNAs for exosomal degradation. Component of the nuclear exosome targeting (NEXT) complex composed of MTREX, ZCCHC8, and RBM7 that directs a subset of non-coding short-lived RNAs for exosomal degradation. Interacts with ZCCHC8; this interaction bridges the interaction between RBM7 and MTREX. Binds to ZFC3H1 and RBM7 in a RNase-insensitive manner. Interacts with EXOSC10; the interaction mediates the association of MTREX with nuclear RNA exosomes. Interacts with isoform 1 of NVL in an ATP-dependent manner; the interaction is required to associate NVL with nuclear RNA exosome. Interacts with WDR74; the interaction dissociation in a late stage of rRNA synthesis is required for appropriate maturation of pre-60S particles and depends on the ATPase activity of NVL. Interacts with MPHOSPH6. Interacts with the RNA cap-binding complex proteins NCBP1 and SRRT. Interacts with NRDE2; the interaction is direct and negatively regulates MTREX function in exosomal degradation by changing its conformation precluding interaction with ZFC3H1, the RNA cap-binding complex proteins NCBP1 and SRRT, and association with the exosome. Associates with the RNA exosome complex.

It localises to the nucleus. It is found in the nucleoplasm. Its subcellular location is the nucleolus. The protein resides in the nucleus speckle. It catalyses the reaction ATP + H2O = ADP + phosphate + H(+). Activated when MTREX is incorporated into NEXT complex an the nuclear RNA exosome complex. Its function is as follows. Catalyzes the ATP-dependent unwinding of RNA duplexes with a single-stranded 3' RNA extension. Central subunit of many protein complexes, namely TRAMP-like, nuclear exosome targeting (NEXT) and poly(A) tail exosome targeting (PAXT). NEXT functions as an RNA exosome cofactor that directs a subset of non-coding short-lived RNAs for exosomal degradation. NEXT is involved in surveillance and turnover of aberrant transcripts and non-coding RNAs. PAXT directs a subset of long and polyadenylated poly(A) RNAs for exosomal degradation. The RNA exosome is fundamental for the degradation of RNA in eukaryotic nuclei. Substrate targeting is facilitated by its cofactor ZCCHC8, which links to RNA-binding protein adapters. Associated with the RNA exosome complex and involved in the 3'-processing of the 7S pre-RNA to the mature 5.8S rRNA. May be involved in pre-mRNA splicing. In the context of NEXT complex can also in vitro unwind DNA:RNA heteroduplexes with a 3' poly (A) RNA tracking strand. Can promote unwinding and degradation of structured RNA substrates when associated with the nuclear exosome and its cofactors. Can displace a DNA strand while translocating on RNA to ultimately degrade the RNA within a DNA/RNA heteroduplex. Plays a role in DNA damage response. This Homo sapiens (Human) protein is Exosome RNA helicase MTR4.